Here is a 959-residue protein sequence, read N- to C-terminus: Alanine--tRNA ligase (959 aa).

At Ser-389 the chain carries Phosphoserine. His-606, His-610, Cys-725, and His-729 together coordinate Zn(2+).

This sequence belongs to the class-II aminoacyl-tRNA synthetase family. As to quaternary structure, monomer. Zn(2+) serves as cofactor.

Its subcellular location is the mitochondrion. It localises to the cytoplasm. The catalysed reaction is tRNA(Ala) + L-alanine + ATP = L-alanyl-tRNA(Ala) + AMP + diphosphate. Its function is as follows. Catalyzes the attachment of alanine to tRNA(Ala) in a two-step reaction: alanine is first activated by ATP to form Ala-AMP and then transferred to the acceptor end of tRNA(Ala). Also edits incorrectly charged tRNA(Ala) via its editing domain. The chain is Alanine--tRNA ligase (ala1) from Schizosaccharomyces pombe (strain 972 / ATCC 24843) (Fission yeast).